A 291-amino-acid chain; its full sequence is Homoserine kinase (291 aa).

80–90 is an ATP binding site; the sequence is RPASGLGSSAA.

It belongs to the GHMP kinase family. Homoserine kinase subfamily.

The protein resides in the cytoplasm. It carries out the reaction L-homoserine + ATP = O-phospho-L-homoserine + ADP + H(+). Its pathway is amino-acid biosynthesis; L-threonine biosynthesis; L-threonine from L-aspartate: step 4/5. Functionally, catalyzes the ATP-dependent phosphorylation of L-homoserine to L-homoserine phosphate. The polypeptide is Homoserine kinase (Natronomonas pharaonis (strain ATCC 35678 / DSM 2160 / CIP 103997 / JCM 8858 / NBRC 14720 / NCIMB 2260 / Gabara) (Halobacterium pharaonis)).